Consider the following 737-residue polypeptide: Catalase-peroxidase (737 aa).

The segment at residues Trp-102 to Tyr-225 is a cross-link (tryptophyl-tyrosyl-methioninium (Trp-Tyr) (with M-251)). The active-site Proton acceptor is the His-103. Positions Tyr-225–Met-251 form a cross-link, tryptophyl-tyrosyl-methioninium (Tyr-Met) (with W-102). His-266 is a heme b binding site.

It belongs to the peroxidase family. Peroxidase/catalase subfamily. Homodimer or homotetramer. Heme b is required as a cofactor. Formation of the three residue Trp-Tyr-Met cross-link is important for the catalase, but not the peroxidase activity of the enzyme.

It carries out the reaction H2O2 + AH2 = A + 2 H2O. The catalysed reaction is 2 H2O2 = O2 + 2 H2O. In terms of biological role, bifunctional enzyme with both catalase and broad-spectrum peroxidase activity. The polypeptide is Catalase-peroxidase (Caulobacter sp. (strain K31)).